The primary structure comprises 250 residues: MVDKLLNATLNVVKNRGEQLFIDVARPYAYTLVAKFDRDKYIMRVATDAEQVSQSAIKDLKLLSIHTNAPSICVVSSVKGHLLQRGVVYLRDDVVFMSLATLTDVLEGKKPIFKLNRGVITASIDGEKLRAKRQQAGLSLGTLATNLGVTRETVYRYERGEIEAPLKIAEKLINMFGEDITKKIKINETPKVSQEELASRQIGAKTYRLLESHPDAIKWEDRTILISSNAERYQKTVELANALGAEVERA.

The HTH cro/C1-type domain occupies 129–183; it reads LRAKRQQAGLSLGTLATNLGVTRETVYRYERGEIEAPLKIAEKLINMFGEDITKK. A DNA-binding region (H-T-H motif) is located at residues 140–159; sequence LGTLATNLGVTRETVYRYER.

This chain is Putative HTH-type transcriptional regulatory protein PAE1627, found in Pyrobaculum aerophilum (strain ATCC 51768 / DSM 7523 / JCM 9630 / CIP 104966 / NBRC 100827 / IM2).